The primary structure comprises 313 residues: D-alanine--D-alanine ligase (313 aa).

Positions 108–308 constitute an ATP-grasp domain; sequence KLVWQQTGVP…YSELVVKVLS (201 aa). 138 to 193 lines the ATP pocket; that stretch reads VAKLGLPLFVKPASEGSSVAVLKVKTADALPAALSEAATHDKIVIVEKSIEGGGEY. Asp262, Glu275, and Asn277 together coordinate Mg(2+).

The protein belongs to the D-alanine--D-alanine ligase family. Mg(2+) is required as a cofactor. Mn(2+) serves as cofactor.

The protein resides in the cytoplasm. It catalyses the reaction 2 D-alanine + ATP = D-alanyl-D-alanine + ADP + phosphate + H(+). It functions in the pathway cell wall biogenesis; peptidoglycan biosynthesis. Its function is as follows. Cell wall formation. This chain is D-alanine--D-alanine ligase, found in Burkholderia vietnamiensis (strain G4 / LMG 22486) (Burkholderia cepacia (strain R1808)).